Consider the following 87-residue polypeptide: Insertion element IS407 uncharacterized 10.0 kDa protein (87 aa).

It belongs to the transposase 8 family.

In Burkholderia multivorans (strain ATCC 17616 / 249), this protein is Insertion element IS407 uncharacterized 10.0 kDa protein.